Consider the following 446-residue polypeptide: uncharacterized protein (446 aa).

The segment at 141–282 (TEAETNGTRP…GPKPKVKRVS (142 aa)) is disordered. The segment covering 159-170 (NSGSKPKAGTQS) has biased composition (polar residues). Basic and acidic residues predominate over residues 194–210 (IKSERRSISQGGEKDKA). S200, S202, S212, and S214 each carry phosphoserine. 2 stretches are compositionally biased toward low complexity: residues 211–221 (SSSSPSSSQQS) and 229–239 (SPSQQNSRSSS). S251 carries the phosphoserine modification. Basic residues predominate over residues 269 to 280 (GKSRGPKPKVKR). S282 and S307 each carry phosphoserine.

This is an uncharacterized protein from Drosophila melanogaster (Fruit fly).